The following is a 428-amino-acid chain: 3-phosphoshikimate 1-carboxyvinyltransferase (428 aa).

3-phosphoshikimate-binding residues include Lys-22, Ser-23, and Arg-27. Lys-22 contributes to the phosphoenolpyruvate binding site. Phosphoenolpyruvate contacts are provided by Gly-96 and Arg-124. 3-phosphoshikimate is bound by residues Ser-170, Ser-171, Gln-172, Ser-198, Asp-314, Asn-337, and Lys-341. Residue Gln-172 participates in phosphoenolpyruvate binding. Residue Asp-314 is the Proton acceptor of the active site. Residues Arg-345, Arg-387, and Lys-412 each coordinate phosphoenolpyruvate.

Belongs to the EPSP synthase family. In terms of assembly, monomer.

The protein localises to the cytoplasm. The enzyme catalyses 3-phosphoshikimate + phosphoenolpyruvate = 5-O-(1-carboxyvinyl)-3-phosphoshikimate + phosphate. The protein operates within metabolic intermediate biosynthesis; chorismate biosynthesis; chorismate from D-erythrose 4-phosphate and phosphoenolpyruvate: step 6/7. Functionally, catalyzes the transfer of the enolpyruvyl moiety of phosphoenolpyruvate (PEP) to the 5-hydroxyl of shikimate-3-phosphate (S3P) to produce enolpyruvyl shikimate-3-phosphate and inorganic phosphate. This is 3-phosphoshikimate 1-carboxyvinyltransferase from Shewanella amazonensis (strain ATCC BAA-1098 / SB2B).